The chain runs to 330 residues: Ketol-acid reductoisomerase (NADP(+)) (330 aa).

In terms of domain architecture, KARI N-terminal Rossmann spans 2–182 (VKIFYDKDVT…GLTKVGVIQT (181 aa)). NADP(+) contacts are provided by residues 25 to 28 (YGSQ), Arg-48, Ser-53, and 83 to 86 (DEVQ). Residue His-108 is part of the active site. Gly-134 is a binding site for NADP(+). The KARI C-terminal knotted domain occupies 183-328 (TFREETETDL…KELRKMCGLE (146 aa)). Mg(2+)-binding residues include Asp-191, Glu-195, Glu-227, and Glu-231. Position 252 (Ser-252) interacts with substrate.

Belongs to the ketol-acid reductoisomerase family. The cofactor is Mg(2+).

It catalyses the reaction (2R)-2,3-dihydroxy-3-methylbutanoate + NADP(+) = (2S)-2-acetolactate + NADPH + H(+). The catalysed reaction is (2R,3R)-2,3-dihydroxy-3-methylpentanoate + NADP(+) = (S)-2-ethyl-2-hydroxy-3-oxobutanoate + NADPH + H(+). It participates in amino-acid biosynthesis; L-isoleucine biosynthesis; L-isoleucine from 2-oxobutanoate: step 2/4. Its pathway is amino-acid biosynthesis; L-valine biosynthesis; L-valine from pyruvate: step 2/4. Functionally, involved in the biosynthesis of branched-chain amino acids (BCAA). Catalyzes an alkyl-migration followed by a ketol-acid reduction of (S)-2-acetolactate (S2AL) to yield (R)-2,3-dihydroxy-isovalerate. In the isomerase reaction, S2AL is rearranged via a Mg-dependent methyl migration to produce 3-hydroxy-3-methyl-2-ketobutyrate (HMKB). In the reductase reaction, this 2-ketoacid undergoes a metal-dependent reduction by NADPH to yield (R)-2,3-dihydroxy-isovalerate. The polypeptide is Ketol-acid reductoisomerase (NADP(+)) (Methanocaldococcus jannaschii (strain ATCC 43067 / DSM 2661 / JAL-1 / JCM 10045 / NBRC 100440) (Methanococcus jannaschii)).